A 346-amino-acid chain; its full sequence is MKLTSEKLPKNPFSLSQYAAKQQTFFQWKKEKPDYYRHANLVDTALQFLKERIRKGDAMAYFLRGQLYFEEGWYEEALAQFEEIQEKDHQAIYQLGVMYYDGLGTVADAEKGVGYMKKILDSSCPQTMHLKFAAAYNLGRAYFEGKGVKRSDEEAERLWLYAADNGNPKASVKAQSILGLFYSMKEPKDLEKAFFWHSEACGNGNLESQGALGLMYLYGQGIRQDTDAALHCLREAAERGNVYAQGILVEYYYKMKFFTKCVSFSKRIADYDEVHDIPMIAHVTDCLPEFISKGMAMASFYYARCLQLGLGITKDEASAKHYYSKACRLNPTLADELHSLLIHQRI.

The stretch at 58-91 is one TPR repeat; it reads AMAYFLRGQLYFEEGWYEEALAQFEEIQEKDHQA. Sel1-like repeat units follow at residues 92-124, 132-167, 172-205, 206-241, 242-276, and 296-331; these read IYQLGVMYYDGLGTVADAEKGVGYMKKILDSSC, FAAAYNLGRAYFEGKGVKRSDEEAERLWLYAADNGN, VKAQSILGLFYSMKEPKDLEKAFFWHSEACGNGN, LESQGALGLMYLYGQGIRQDTDAALHCLREAAERGN, VYAQGILVEYYYKMKFFTKCVSFSKRIADYDEVHD, and AMASFYYARCLQLGLGITKDEASAKHYYSKACRLNP.

Interacts with LRP2.

It localises to the cytoplasm. Its function is as follows. May act as an adapter that regulates LRP2 function. The polypeptide is LRP2-binding protein (Lrp2bp) (Rattus norvegicus (Rat)).